The following is a 240-amino-acid chain: Octanoyltransferase (240 aa).

One can recognise a BPL/LPL catalytic domain in the interval 31 to 216; the sequence is GQVGDTLLLL…HLCAVFDLEP (186 aa). Substrate contacts are provided by residues 76–83, 145–147, and 159–161; these read RGGGATYH, AIG, and GLA. Cys-177 functions as the Acyl-thioester intermediate in the catalytic mechanism.

This sequence belongs to the LipB family.

It is found in the cytoplasm. The catalysed reaction is octanoyl-[ACP] + L-lysyl-[protein] = N(6)-octanoyl-L-lysyl-[protein] + holo-[ACP] + H(+). It functions in the pathway protein modification; protein lipoylation via endogenous pathway; protein N(6)-(lipoyl)lysine from octanoyl-[acyl-carrier-protein]: step 1/2. Functionally, catalyzes the transfer of endogenously produced octanoic acid from octanoyl-acyl-carrier-protein onto the lipoyl domains of lipoate-dependent enzymes. Lipoyl-ACP can also act as a substrate although octanoyl-ACP is likely to be the physiological substrate. In Roseiflexus sp. (strain RS-1), this protein is Octanoyltransferase.